The following is a 507-amino-acid chain: MNPLSQSALVPLRKKAKMAPISQSFCQHNVKFKEIVLFLVERKMGSSRRTFLMELARKRGFQTEIELSDSVTHIVAENNSGAEVLEWLQSKKLGFTVKTHILDISWFTECMEAGRPVEIQNRHLLPVQQDCSANFNPPLSSSCVQVSQYACQRCTTLQDTNRIFTDAFDILAEHFEFCENKGRTVAFLRASSLIKSLPFPITAMKELEGLPWLGDQMKGIIEEILEEGKSYKVLEVMNEERYKSFKQFTSVFGVGLKTSDKWFRMGFRTLEEIKNEKELKLTKMQKCGLLYYEDITSYVSRAEAETTEQLIKSIVWKFVPDAIVTLTGGFRRGKKKGHDVDILITCARKGKEKNILHNTMSVLKNRGLLLFYNIIESTFDETKLPSRHVDALDHFQKCFTILKLPKRQMDIGNIIDPHECERKNWKAVRLDLVITPYEQYPYALLGWTGSRQFERDLRRYATHEKRMMLDNHGLYDKTKNNFLKANNEEDIFKQLGLDYLEPWERNA.

The Nuclear localization signal signature appears at 11-17; it reads PLRKKAK. The BRCT domain occupies 27-124; that stretch reads QHNVKFKEIV…RPVEIQNRHL (98 aa). Residues 254–258 are involved in DNA binding; sequence VGLKT. A 2'-deoxyribonucleoside 5'-triphosphate contacts are provided by residues 329–334 and 338–341; these read GFRRGK and HDVD. The Mg(2+) site is built by Asp339, Asp341, and Asp431. 446 to 447 serves as a coordination point for a 2'-deoxyribonucleoside 5'-triphosphate; sequence GW.

This sequence belongs to the DNA polymerase type-X family. It depends on Mg(2+) as a cofactor. In terms of tissue distribution, found in the thymus and not in the spleen, kidney, intestine, or liver.

It localises to the nucleus. The catalysed reaction is DNA(n) + a 2'-deoxyribonucleoside 5'-triphosphate = DNA(n+1) + diphosphate. In terms of biological role, template-independent DNA polymerase which catalyzes the random addition of deoxynucleoside 5'-triphosphate to the 3'-end of a DNA initiator. One of the in vivo functions of this enzyme is the addition of nucleotides at the junction (N region) of rearranged Ig heavy chain and T-cell receptor gene segments during the maturation of B- and T-cells. The polypeptide is DNA nucleotidylexotransferase (dntt) (Xenopus laevis (African clawed frog)).